A 474-amino-acid polypeptide reads, in one-letter code: Ribulose bisphosphate carboxylase large chain (474 aa).

Asparagine 117 and threonine 167 together coordinate substrate. The active-site Proton acceptor is lysine 169. Position 171 (lysine 171) interacts with substrate. Residues lysine 195, aspartate 197, and glutamate 198 each coordinate Mg(2+). Lysine 195 is modified (N6-carboxylysine). Histidine 288 (proton acceptor) is an active-site residue. Substrate contacts are provided by arginine 289, histidine 321, and serine 373.

Belongs to the RuBisCO large chain family. Type I subfamily. In terms of assembly, heterohexadecamer of 8 large chains and 8 small chains. Mg(2+) serves as cofactor.

It catalyses the reaction 2 (2R)-3-phosphoglycerate + 2 H(+) = D-ribulose 1,5-bisphosphate + CO2 + H2O. The enzyme catalyses D-ribulose 1,5-bisphosphate + O2 = 2-phosphoglycolate + (2R)-3-phosphoglycerate + 2 H(+). Its function is as follows. RuBisCO catalyzes two reactions: the carboxylation of D-ribulose 1,5-bisphosphate, the primary event in carbon dioxide fixation, as well as the oxidative fragmentation of the pentose substrate. Both reactions occur simultaneously and in competition at the same active site. This Hydrogenophilus thermoluteolus (Pseudomonas hydrogenothermophila) protein is Ribulose bisphosphate carboxylase large chain.